The following is a 544-amino-acid chain: Shootin-1 (544 aa).

Coiled-coil stretches lie at residues 17 to 100 (SNQV…LKRK), 141 to 184 (IVIT…EKHD), and 259 to 349 (EALQ…QVSN). Positions 343–544 (KLQQVSNPPT…TTTICTEQLS (202 aa)) are disordered. Positions 352-371 (TAAPAPPPPPPPPPPPPPPS) are enriched in pro residues. The segment covering 372–383 (SSSSNPLSSLLS) has biased composition (low complexity). Residues 397–412 (LVEKDSSEKSPEKDVR) are compositionally biased toward basic and acidic residues. Residues 469-479 (SSSPGPRPPSP) are compositionally biased toward pro residues. A coiled-coil region spans residues 480-504 (SEKSELEKALQRRREAVKSAKNNTN). Residues 481–497 (EKSELEKALQRRREAVK) are compositionally biased toward basic and acidic residues. The span at 499 to 544 (AKNNTNPSSVVDLTQIKQTRSEPGQNTGDQETLRHTTTTICTEQLS) shows a compositional bias: polar residues.

Belongs to the shootin family.

The protein resides in the perikaryon. The protein localises to the cell projection. It localises to the axon. Its subcellular location is the growth cone. It is found in the cytoplasm. The protein resides in the cytoskeleton. The protein localises to the filopodium. It localises to the lamellipodium. In terms of biological role, involved in the generation of internal asymmetric signals required for neuronal polarization and neurite outgrowth. This is Shootin-1 from Danio rerio (Zebrafish).